Consider the following 551-residue polypeptide: Tripartite motif-containing protein 5 (551 aa).

At Ala2 the chain carries N-acetylalanine. Residues Cys15 to Arg55 form an RING-type zinc finger. Ser82 is subject to Phosphoserine. The B box-type zinc-finger motif lies at Gln87–Val128. Zn(2+)-binding residues include Cys92, His95, Cys114, and His120. Residues Leu127 to Gln221 adopt a coiled-coil conformation. Residues Phe182–Asn195 are required for interaction with GABARAP and for autophagy. One can recognise a B30.2/SPRY domain in the interval Pro276–Ser551.

This sequence belongs to the TRIM/RBCC family. As to quaternary structure, can form homodimers and homotrimers. In addition to lower-order dimerization, also exhibits a higher-order multimerization and both low- and high-order multimerizations are essential for its restriction activity. Interacts with BTBD1 and BTBD2. Interacts with PSMC4, PSMC5, PSMD7 and HSPA8/HSC70. Interacts (via B30.2/SPRY domain) with HSPA1A/B. Interacts with PSMC2, MAP3K7/TAK1, TAB2 and TAB3. Interacts with SQSTM1. Interacts with TRIM6 and TRIM34. Interacts with ULK1 (phosphorylated form), GABARAP, GABARAPL1, GABARAPL2, MAP1LC3A, MAP1LC3C and BECN1. Post-translationally, degraded in a proteasome-independent fashion in the absence of viral infection but in a proteasome-dependent fashion following exposure to restriction sensitive virus. Autoubiquitinated in a RING finger- and UBE2D2-dependent manner. Monoubiquitinated by TRIM21. Deubiquitinated by Yersinia YopJ. Ubiquitination may not lead to proteasomal degradation.

The protein resides in the cytoplasm. Its subcellular location is the nucleus. It catalyses the reaction S-ubiquitinyl-[E2 ubiquitin-conjugating enzyme]-L-cysteine + [acceptor protein]-L-lysine = [E2 ubiquitin-conjugating enzyme]-L-cysteine + N(6)-ubiquitinyl-[acceptor protein]-L-lysine.. Its pathway is protein modification; protein ubiquitination. Functionally, capsid-specific restriction factor that prevents infection from non-host-adapted retroviruses. Blocks viral replication early in the life cycle, after viral entry but before reverse transcription. In addition to acting as a capsid-specific restriction factor, also acts as a pattern recognition receptor that activates innate immune signaling in response to the retroviral capsid lattice. Binding to the viral capsid triggers its E3 ubiquitin ligase activity, and in concert with the heterodimeric ubiquitin conjugating enzyme complex UBE2V1-UBE2N (also known as UBC13-UEV1A complex) generates 'Lys-63'-linked polyubiquitin chains, which in turn are catalysts in the autophosphorylation of the MAP3K7/TAK1 complex (includes TAK1, TAB2, and TAB3). Activation of the MAP3K7/TAK1 complex by autophosphorylation results in the induction and expression of NF-kappa-B and MAPK-responsive inflammatory genes, thereby leading to an innate immune response in the infected cell. Plays a role in regulating autophagy through activation of autophagy regulator BECN1 by causing its dissociation from its inhibitors BCL2 and TAB2. The protein is Tripartite motif-containing protein 5 (TRIM5) of Alouatta sara (Bolivian red howler monkey).